The following is a 143-amino-acid chain: Large ribosomal subunit protein uL13 (143 aa).

Belongs to the universal ribosomal protein uL13 family. As to quaternary structure, part of the 50S ribosomal subunit.

Its function is as follows. This protein is one of the early assembly proteins of the 50S ribosomal subunit, although it is not seen to bind rRNA by itself. It is important during the early stages of 50S assembly. The polypeptide is Large ribosomal subunit protein uL13 (Desulfitobacterium hafniense (strain DSM 10664 / DCB-2)).